Consider the following 340-residue polypeptide: MSSKLVNYLRLTFLSFLGIASTSLDAMPAGNPAFPVIPGINIEQKNACSFDLCNSYDVLSALSGNLKLCFCGDYIFSEEAQVKDVPVVTSVTTAGVGPSPDITSTTKTRNFDLVNCNLNTNCVAVAFSLPDRSLSAIPLFDVSFEVKVGGLKQYYRLPMNAYRDFTSEPLNSESEVTDGMIEVQSNYGFVWDVSLKKVIWKDGVSFVGVGADYRHASCPIDYIIANSQANPEVFIADSDGKLNFKEWSVCVGLTTYVNDYVLPYLAFSIGSVSRQAPDDSFKKLEDRFTNLKFKVRKITSSHRGNICIGATNYVADNFFYNVEGRWGSQRAVNVSGGFQF.

Residues 1–26 (MSSKLVNYLRLTFLSFLGIASTSLDA) form the signal peptide.

It belongs to the chlamydial OMP family.

The protein resides in the cell outer membrane. The chain is Outer membrane protein B (ompB) from Chlamydia trachomatis serovar D (strain ATCC VR-885 / DSM 19411 / UW-3/Cx).